The sequence spans 105 residues: Thioredoxin (105 aa).

In terms of domain architecture, Thioredoxin spans 2–105; the sequence is VKQIESKTAF…KLEATINELV (104 aa). The residue at position 3 (K3) is an N6-acetyllysine. Residue K8 is modified to N6-succinyllysine. Catalysis depends on nucleophile residues C32 and C35. C32 and C35 are joined by a disulfide. K39 carries the post-translational modification N6-acetyllysine. S-nitrosocysteine occurs at positions 62 and 69. C73 bears the S-nitrosocysteine; alternate mark. K94 carries the N6-acetyllysine; alternate modification. An N6-succinyllysine; alternate modification is found at K94.

It belongs to the thioredoxin family. In terms of assembly, homodimer; disulfide-linked. Interacts with TXNIP through the redox-active site. Interacts with MAP3K5 and CASP3. In case of infection, interacts with S.typhimurium protein slrP. Interacts with APEX1; the interaction stimulates the FOS/JUN AP-1 DNA-binding activity in a redox-dependent manner. In terms of processing, in the fully reduced protein, both Cys-69 and Cys-73 are nitrosylated in response to nitric oxide (NO). When two disulfide bonds are present in the protein, only Cys-73 is nitrosylated. Cys-73 can serve as donor for nitrosylation of target proteins. Post-translationally, in case of infection, ubiquitinated by S.typhimurium protein slrP, leading to its degradation.

It localises to the nucleus. Its subcellular location is the cytoplasm. The protein resides in the secreted. Participates in various redox reactions through the reversible oxidation of its active center dithiol to a disulfide and catalyzes dithiol-disulfide exchange reactions. Plays a role in the reversible S-nitrosylation of cysteine residues in target proteins, and thereby contributes to the response to intracellular nitric oxide. Nitrosylates the active site Cys of CASP3 in response to nitric oxide (NO), and thereby inhibits caspase-3 activity. Induces the FOS/JUN AP-1 DNA-binding activity in ionizing radiation (IR) cells through its oxidation/reduction status and stimulates AP-1 transcriptional activity. In terms of biological role, ADF augments the expression of the interleukin-2 receptor TAC (IL2R/P55). The polypeptide is Thioredoxin (TXN) (Homo sapiens (Human)).